The chain runs to 82 residues: Large ribosomal subunit protein bL27 (82 aa).

The interval Met-1–Leu-21 is disordered.

The protein belongs to the bacterial ribosomal protein bL27 family.

This chain is Large ribosomal subunit protein bL27, found in Tropheryma whipplei (strain TW08/27) (Whipple's bacillus).